A 206-amino-acid polypeptide reads, in one-letter code: Ectodysplasin-A receptor-associated adapter protein (206 aa).

Disordered regions lie at residues 1-36 (MRPL…DKYP) and 52-77 (TLNC…TGDP). Polar residues-rich tracts occupy residues 24–33 (PSTLSFNTSD) and 52–62 (TLNCPPNSDMK). The Death domain maps to 114–190 (DVIRIKLDPC…DVEKVLRRWV (77 aa)).

As to quaternary structure, self-associates and binds to EDAR, TRAF1, TRAF2 and TRAF3.

It localises to the cytoplasm. Adapter protein that interacts with EDAR DEATH domain and couples the receptor to EDA signaling pathway during morphogenesis of ectodermal organs. Mediates the activation of NF-kappa-B. This is Ectodysplasin-A receptor-associated adapter protein (EDARADD) from Macaca fascicularis (Crab-eating macaque).